Consider the following 536-residue polypeptide: Phosphoenolpyruvate carboxykinase (ATP) (536 aa).

Substrate-binding residues include Arg61, Tyr195, and Lys201. Residues Lys201, His220, and 236–244 (GLSGTGKTT) contribute to the ATP site. Mn(2+)-binding residues include Lys201 and His220. Residue Asp257 participates in Mn(2+) binding. ATP-binding residues include Glu285, Arg322, and Thr447. Arg322 is a binding site for substrate.

Belongs to the phosphoenolpyruvate carboxykinase (ATP) family. It depends on Mn(2+) as a cofactor.

The protein localises to the cytoplasm. It carries out the reaction oxaloacetate + ATP = phosphoenolpyruvate + ADP + CO2. The protein operates within carbohydrate biosynthesis; gluconeogenesis. Involved in the gluconeogenesis. Catalyzes the conversion of oxaloacetate (OAA) to phosphoenolpyruvate (PEP) through direct phosphoryl transfer between the nucleoside triphosphate and OAA. This chain is Phosphoenolpyruvate carboxykinase (ATP), found in Rhizobium rhizogenes (strain K84 / ATCC BAA-868) (Agrobacterium radiobacter).